The chain runs to 484 residues: Glutamate--tRNA ligase (484 aa).

The 'HIGH' region signature appears at 9–19 (PSPTGNLHIGT). Zn(2+) is bound by residues C98, C100, H125, and H127. The 'KMSKS' region motif lies at 250–254 (KLSKR). K253 lines the ATP pocket.

The protein belongs to the class-I aminoacyl-tRNA synthetase family. Glutamate--tRNA ligase type 1 subfamily. As to quaternary structure, monomer. Requires Zn(2+) as cofactor.

It is found in the cytoplasm. It carries out the reaction tRNA(Glu) + L-glutamate + ATP = L-glutamyl-tRNA(Glu) + AMP + diphosphate. In terms of biological role, catalyzes the attachment of glutamate to tRNA(Glu) in a two-step reaction: glutamate is first activated by ATP to form Glu-AMP and then transferred to the acceptor end of tRNA(Glu). In Crocosphaera subtropica (strain ATCC 51142 / BH68) (Cyanothece sp. (strain ATCC 51142)), this protein is Glutamate--tRNA ligase.